A 120-amino-acid chain; its full sequence is Large ribosomal subunit protein bL21 (120 aa).

It belongs to the bacterial ribosomal protein bL21 family. In terms of assembly, part of the 50S ribosomal subunit. Contacts protein L20.

Functionally, this protein binds to 23S rRNA in the presence of protein L20. This Roseiflexus castenholzii (strain DSM 13941 / HLO8) protein is Large ribosomal subunit protein bL21.